A 432-amino-acid polypeptide reads, in one-letter code: FLYWCH-type zinc finger-containing protein peb-1 (432 aa).

The interval 1–33 is disordered; it reads MLGLEKPLSSDISSSSTDTSAISPISVSSMPLS. Residues 9–26 show a composition bias toward low complexity; it reads SSDISSSSTDTSAISPIS. The segment at residues 30 to 188 is a DNA-binding region (required for DNA-binding); it reads MPLSPDKEKK…RNKEGKPRKP (159 aa). The FLYWCH-type zinc finger occupies 53-120; it reads IVTSFKGYQK…NACTKNTHNH (68 aa). The segment at 174 to 195 is disordered; it reads SLVSARNKEGKPRKPKSKTSTN.

It localises to the nucleus. In terms of biological role, putative transcription factor. Binds to specific sequence motif 5'-[TC][AGT]TGCC[GA][AT]-3' in regulatory elements of target genes such as myosin myo-2. May modulate gene expression, perhaps acting in opposition to transcription factor pha-4. Involved in morphogenesis, perhaps especially in formation of the pharynx. Plays roles in molting, feeding and morphology. The chain is FLYWCH-type zinc finger-containing protein peb-1 from Caenorhabditis briggsae.